The following is a 227-amino-acid chain: Probable GTP-binding protein EngB (227 aa).

The region spanning 13–188 (IGLEVAFAGR…AGVMGNWYEY (176 aa)) is the EngB-type G domain. Residues 21-28 (GRSNAGKS), 48-52 (GRTQM), 67-70 (DLPG), 134-137 (TKAD), and 167-169 (FSA) contribute to the GTP site. The Mg(2+) site is built by Ser28 and Thr50.

Belongs to the TRAFAC class TrmE-Era-EngA-EngB-Septin-like GTPase superfamily. EngB GTPase family. The cofactor is Mg(2+).

Functionally, necessary for normal cell division and for the maintenance of normal septation. The chain is Probable GTP-binding protein EngB from Psychrobacter cryohalolentis (strain ATCC BAA-1226 / DSM 17306 / VKM B-2378 / K5).